We begin with the raw amino-acid sequence, 571 residues long: DExH-box ATP-dependent RNA helicase DExH16, mitochondrial (571 aa).

The transit peptide at 1-56 (MAYSVVRLRKVSALGISRVLQADKGSLWRFHFEPEFGDLLRLGVLTRNYRKNSGSP) directs the protein to the mitochondrion. The region spanning 83-212 (IARKKKRKVI…HLCGDPAVVP (130 aa)) is the Helicase ATP-binding domain. 96 to 103 (GPTNSGKT) is a binding site for ATP. Positions 176–179 (DEIQ) match the DEIH box; degenerate motif. The region spanning 213-399 (LVEDILKVTG…GLFPTFDLLS (187 aa)) is the Helicase C-terminal domain.

It belongs to the DExH box helicase family. In terms of assembly, homodimer; in free form. Component of the mitochondrial degradosome (mtEXO) complex which is a heteropentamer containing 2 copies of SUPV3L1 and 3 copies of PNPT1. Mg(2+) serves as cofactor. The cofactor is Mn(2+). As to expression, weakly expressed.

It localises to the nucleus. Its subcellular location is the mitochondrion matrix. The protein localises to the mitochondrion nucleoid. It catalyses the reaction ATP + H2O = ADP + phosphate + H(+). Activated by the presence of mitochondrial RNA. Its function is as follows. Major helicase player in mitochondrial RNA metabolism. Component of the mitochondrial degradosome (mtEXO) complex, that degrades 3' overhang double-stranded RNA with a 3'-to-5' directionality in an ATP-dependent manner. ATPase and ATP-dependent multisubstrate helicase, able to unwind double-stranded (ds) DNA and RNA, and RNA/DNA heteroduplexes in the 5'-to-3' direction. Plays a role in the RNA surveillance system in mitochondria; regulates the stability of mature mRNAs, the removal of aberrantly formed mRNAs and the rapid degradation of non coding processing intermediates. Required during pollen development. The protein is DExH-box ATP-dependent RNA helicase DExH16, mitochondrial of Arabidopsis thaliana (Mouse-ear cress).